An 85-amino-acid chain; its full sequence is Alpha-defensin 14 (85 aa).

An N-terminal signal peptide occupies residues 1–11; the sequence is ALVLLAFQVQA. Residues 12 to 50 constitute a propeptide that is removed on maturation; the sequence is DPIQNTDEETKTEEQPGEDDQAVSVSFGDPEGSSLQEES. A disordered region spans residues 13-48; that stretch reads PIQNTDEETKTEEQPGEDDQAVSVSFGDPEGSSLQE. 3 disulfides stabilise this stretch: cysteine 56/cysteine 84, cysteine 58/cysteine 73, and cysteine 63/cysteine 83.

The protein belongs to the alpha-defensin family. In terms of tissue distribution, paneth cells of the small bowel.

It is found in the secreted. Probably contributes to the antimicrobial barrier function of the small bowel mucosa. This Mus musculus (Mouse) protein is Alpha-defensin 14 (Defa14).